The primary structure comprises 959 residues: MMS19 nucleotide excision repair protein (959 aa).

4 HEAT repeats span residues 794–828 (QKLF…ATPQ), 832–871 (KLNI…QQDT), 874–915 (QGHL…YPTF), and 918–956 (LPHK…VGAP).

Belongs to the MET18/MMS19 family. Component of the CIA complex. Interacts with Xpd and galla-2. Binds to microtubules. As to expression, expressed in embryos (at protein level).

Its subcellular location is the cytoplasm. It is found in the cytoskeleton. The protein localises to the spindle. It localises to the nucleus. The protein resides in the midbody. Functionally, key component of the cytosolic iron-sulfur protein assembly (CIA) complex, a multiprotein complex that mediates the incorporation of iron-sulfur cluster into apoproteins specifically involved in DNA metabolism and genomic integrity. In the CIA complex, MMS19 acts as an adapter between early-acting CIA components and a subset of cellular target iron-sulfur proteins. Essential for diploid cell cycles, organ growth and development. Regulates mitosis by binding to Xpd and thereby competing with the Xpd-mediated repression on the Cdk-activating kinase (CAK) complex. Regulates the centrosomal localization of the MT regulator tacc, a downstream target of aurA kinase. Binds to microtubules (MT). Regulates spindle and astral MT growth, MT stability and bundling. In neuroblasts, necessary for timely and coordinated spindle assembly and orientation which is necessary for mitotic progression. In young embryos, the maternal protein is important for progression through mitosis. The polypeptide is MMS19 nucleotide excision repair protein (Drosophila melanogaster (Fruit fly)).